A 397-amino-acid chain; its full sequence is MQKKTLSDISLQGKRVLMRVDFNVPLDQDRNITDEKRIVEALPSIRKVIDNGGRLILMSHLGRPKGKVNPAFSLSPVAKRLSELLDCPVTMAGDCIGTEVMQQVLALQDGDVLMLENLRFHPEEEANDPDFARELASLGEIYVNDAFGTAHRAHASTEGITHFMQTAVAGYLIEKELRYLGTALNDAQRPFVAILGGAKISGKIDVLESLFEKVDTVLVGGAMVFTFFKAQGLDVGNSLVEENKLELAVSLLEKAKAKNVRLLLPEDVVVAGEISADAPSRVEPVSAISAGMIGLDIGPATIETYRKEILDAKTVLWNGPMGVFEIDQFARGTFAVAQALADATAEGAITIIGGGDSAAAIAKAGLSDKVTHVSTGGGASLEFLEGKELPGIAALND.

Substrate is bound by residues 21 to 23 (DFN), R37, 60 to 63 (HLGR), R119, and R152. ATP is bound by residues K203, G294, E325, and 354-357 (GGDS).

This sequence belongs to the phosphoglycerate kinase family. Monomer.

It is found in the cytoplasm. It catalyses the reaction (2R)-3-phosphoglycerate + ATP = (2R)-3-phospho-glyceroyl phosphate + ADP. Its pathway is carbohydrate degradation; glycolysis; pyruvate from D-glyceraldehyde 3-phosphate: step 2/5. In Chlorobaculum tepidum (strain ATCC 49652 / DSM 12025 / NBRC 103806 / TLS) (Chlorobium tepidum), this protein is Phosphoglycerate kinase.